The sequence spans 442 residues: Chromosomal replication initiator protein DnaA (442 aa).

The domain I, interacts with DnaA modulators stretch occupies residues 1-75 (MDAWPRCLER…GNGEVALAVG (75 aa)). The tract at residues 75-104 (GSRPRAPEPLPAPQAVASAPAAAPIVPFAG) is domain II. Positions 105-322 (NLDSHYTFAN…GALNTLVARA (218 aa)) are domain III, AAA+ region. ATP contacts are provided by G150, G152, K153, and T154. Residues 323–442 (NFTGRSITVE…WEKLIRKLSE (120 aa)) are domain IV, binds dsDNA.

It belongs to the DnaA family. As to quaternary structure, oligomerizes as a right-handed, spiral filament on DNA at oriC.

It localises to the cytoplasm. Functionally, plays an essential role in the initiation and regulation of chromosomal replication. ATP-DnaA binds to the origin of replication (oriC) to initiate formation of the DNA replication initiation complex once per cell cycle. Binds the DnaA box (a 9 base pair repeat at the origin) and separates the double-stranded (ds)DNA. Forms a right-handed helical filament on oriC DNA; dsDNA binds to the exterior of the filament while single-stranded (ss)DNA is stabiized in the filament's interior. The ATP-DnaA-oriC complex binds and stabilizes one strand of the AT-rich DNA unwinding element (DUE), permitting loading of DNA polymerase. After initiation quickly degrades to an ADP-DnaA complex that is not apt for DNA replication. Binds acidic phospholipids. This chain is Chromosomal replication initiator protein DnaA, found in Xanthomonas campestris pv. campestris (strain 8004).